A 405-amino-acid chain; its full sequence is Probable tRNA sulfurtransferase (405 aa).

Residues 60–165 (VPVAESLKQI…EEAAYLSYEN (106 aa)) enclose the THUMP domain. Residues 183–184 (ML), 208–209 (HF), arginine 265, glycine 287, and glutamine 296 contribute to the ATP site.

Belongs to the ThiI family.

Its subcellular location is the cytoplasm. It catalyses the reaction [ThiI sulfur-carrier protein]-S-sulfanyl-L-cysteine + a uridine in tRNA + 2 reduced [2Fe-2S]-[ferredoxin] + ATP + H(+) = [ThiI sulfur-carrier protein]-L-cysteine + a 4-thiouridine in tRNA + 2 oxidized [2Fe-2S]-[ferredoxin] + AMP + diphosphate. It carries out the reaction [ThiS sulfur-carrier protein]-C-terminal Gly-Gly-AMP + S-sulfanyl-L-cysteinyl-[cysteine desulfurase] + AH2 = [ThiS sulfur-carrier protein]-C-terminal-Gly-aminoethanethioate + L-cysteinyl-[cysteine desulfurase] + A + AMP + 2 H(+). The protein operates within cofactor biosynthesis; thiamine diphosphate biosynthesis. Its function is as follows. Catalyzes the ATP-dependent transfer of a sulfur to tRNA to produce 4-thiouridine in position 8 of tRNAs, which functions as a near-UV photosensor. Also catalyzes the transfer of sulfur to the sulfur carrier protein ThiS, forming ThiS-thiocarboxylate. This is a step in the synthesis of thiazole, in the thiamine biosynthesis pathway. The sulfur is donated as persulfide by IscS. This Streptococcus mutans serotype c (strain ATCC 700610 / UA159) protein is Probable tRNA sulfurtransferase.